The sequence spans 269 residues: Bis(5'-nucleosyl)-tetraphosphatase, symmetrical (269 aa).

Belongs to the Ap4A hydrolase family.

It catalyses the reaction P(1),P(4)-bis(5'-adenosyl) tetraphosphate + H2O = 2 ADP + 2 H(+). Hydrolyzes diadenosine 5',5'''-P1,P4-tetraphosphate to yield ADP. The sequence is that of Bis(5'-nucleosyl)-tetraphosphatase, symmetrical from Vibrio vulnificus (strain CMCP6).